The sequence spans 282 residues: Energy-coupling factor transporter ATP-binding protein EcfA1 (282 aa).

One can recognise an ABC transporter domain in the interval 6–243 (VTVKHLSFTY…EVLIKSAGLE (238 aa)). 40–47 (GHNGSGKS) lines the ATP pocket.

This sequence belongs to the ABC transporter superfamily. Energy-coupling factor EcfA family. In terms of assembly, forms a stable energy-coupling factor (ECF) transporter complex composed of 2 membrane-embedded substrate-binding proteins (S component), 2 ATP-binding proteins (A component) and 2 transmembrane proteins (T component).

The protein resides in the cell membrane. Functionally, ATP-binding (A) component of a common energy-coupling factor (ECF) ABC-transporter complex. Unlike classic ABC transporters this ECF transporter provides the energy necessary to transport a number of different substrates. This chain is Energy-coupling factor transporter ATP-binding protein EcfA1, found in Lactobacillus johnsonii (strain CNCM I-12250 / La1 / NCC 533).